We begin with the raw amino-acid sequence, 556 residues long: Formate--tetrahydrofolate ligase (556 aa).

65–72 (TPAGEGKS) contributes to the ATP binding site.

It belongs to the formate--tetrahydrofolate ligase family.

It carries out the reaction (6S)-5,6,7,8-tetrahydrofolate + formate + ATP = (6R)-10-formyltetrahydrofolate + ADP + phosphate. It functions in the pathway one-carbon metabolism; tetrahydrofolate interconversion. The polypeptide is Formate--tetrahydrofolate ligase (Clostridium beijerinckii (strain ATCC 51743 / NCIMB 8052) (Clostridium acetobutylicum)).